A 78-amino-acid polypeptide reads, in one-letter code: Probable Vpr-like protein (78 aa).

The Nuclear export signal motif lies at 35 to 43 (AIRLLQGLF). A Nuclear localization signal motif is present at residues 45 to 54 (RYRFKKPRVD).

It localises to the virion. The protein localises to the host nucleus. Seems to function as a Vpr-like protein, since it mediates host cell cycle arrest in G2 phase. Cell cycle arrest creates a favorable environment for maximizing viral expression and production. This is Probable Vpr-like protein from Feline immunodeficiency virus (isolate Petaluma) (FIV).